The sequence spans 219 residues: MDREALLQAVKEARELAKPRNFTQSFEFIATLKEIDMRKPENRIKTEVVLPHGRGKEAKIAVIGTGDLAKQAEELGLTVIRKEEIEELGKNKRKLRKIAKAHDFFIAQADLMPLIGRYMGVILGPRGKMPKPVPANANIKPLVERLKKTVVINTRDKPYFQVLVGNEKMTDEQIVDNIEAVLNVVAKKYEKGLYHIKDAYVKLTMGPAVKVKKEKAKKK.

This sequence belongs to the universal ribosomal protein uL1 family. Part of the 50S ribosomal subunit.

In terms of biological role, probably involved in E site tRNA release. Binds directly to 23S rRNA. Its function is as follows. Protein L1 is also a translational repressor protein, it controls the translation of its operon by binding to its mRNA. This chain is Large ribosomal subunit protein uL1, found in Methanocaldococcus jannaschii (strain ATCC 43067 / DSM 2661 / JAL-1 / JCM 10045 / NBRC 100440) (Methanococcus jannaschii).